A 295-amino-acid polypeptide reads, in one-letter code: Small ribosomal subunit protein bS1 (295 aa).

3 consecutive S1 motif domains span residues 28–97 (GQLV…VSLR), 115–179 (GQTV…LSER), and 193–261 (GQLI…LSTK).

Belongs to the bacterial ribosomal protein bS1 family.

In terms of biological role, binds mRNA. The polypeptide is Small ribosomal subunit protein bS1 (rpsA) (Synechococcus elongatus (strain ATCC 33912 / PCC 7942 / FACHB-805) (Anacystis nidulans R2)).